A 216-amino-acid polypeptide reads, in one-letter code: Imidazole glycerol phosphate synthase subunit HisH (216 aa).

Residues 2 to 216 (RVAIIDYGSG…LITNFLRWRP (215 aa)) form the Glutamine amidotransferase type-1 domain. The active-site Nucleophile is C88. Catalysis depends on residues H196 and E198.

As to quaternary structure, heterodimer of HisH and HisF.

Its subcellular location is the cytoplasm. It catalyses the reaction 5-[(5-phospho-1-deoxy-D-ribulos-1-ylimino)methylamino]-1-(5-phospho-beta-D-ribosyl)imidazole-4-carboxamide + L-glutamine = D-erythro-1-(imidazol-4-yl)glycerol 3-phosphate + 5-amino-1-(5-phospho-beta-D-ribosyl)imidazole-4-carboxamide + L-glutamate + H(+). The enzyme catalyses L-glutamine + H2O = L-glutamate + NH4(+). It participates in amino-acid biosynthesis; L-histidine biosynthesis; L-histidine from 5-phospho-alpha-D-ribose 1-diphosphate: step 5/9. In terms of biological role, IGPS catalyzes the conversion of PRFAR and glutamine to IGP, AICAR and glutamate. The HisH subunit catalyzes the hydrolysis of glutamine to glutamate and ammonia as part of the synthesis of IGP and AICAR. The resulting ammonia molecule is channeled to the active site of HisF. The polypeptide is Imidazole glycerol phosphate synthase subunit HisH (Mesorhizobium japonicum (strain LMG 29417 / CECT 9101 / MAFF 303099) (Mesorhizobium loti (strain MAFF 303099))).